We begin with the raw amino-acid sequence, 994 residues long: Myosin IA heavy chain (994 aa).

Positions 12–720 (VGVEDLIMLT…PLFLLEDKRN (709 aa)) constitute a Myosin motor domain. Residue 105-112 (GESGAGKT) coordinates ATP. The actin-binding stretch occupies residues 574–654 (TFIPTDKKRP…RAGYCYRQTF (81 aa)). IQ domains lie at 723–744 (LNDL…KWYL) and 745–774 (RTLA…QSIS). A TH1 domain is found at 782–970 (RNRQSIKLSK…ANSPSFTAKA (189 aa)).

Belongs to the TRAFAC class myosin-kinesin ATPase superfamily. Myosin family. Myosin I heavy chain is single-headed. Dimer of a heavy and a light chain. Inability to self-assemble into filaments.

In terms of biological role, actin-based motor protein, possibly involved in a wide range of motile processes, such as cell movement across a surface, and extension and retraction of pseudopodia or lamellipodia. The protein is Myosin IA heavy chain (myoA) of Dictyostelium discoideum (Social amoeba).